A 572-amino-acid polypeptide reads, in one-letter code: Asparagine--tRNA ligase, cytoplasmic 1 (572 aa).

A2 carries the post-translational modification N-acetylalanine. A DNA-binding region (OB) is located at residues V53–V131. Residues D236–P292 enclose the WHEP-TRS domain.

This sequence belongs to the class-II aminoacyl-tRNA synthetase family.

It localises to the cytoplasm. The protein localises to the cytosol. The catalysed reaction is tRNA(Asn) + L-asparagine + ATP = L-asparaginyl-tRNA(Asn) + AMP + diphosphate + H(+). The protein is Asparagine--tRNA ligase, cytoplasmic 1 of Arabidopsis thaliana (Mouse-ear cress).